The following is a 403-amino-acid chain: Protein-glutamate methylesterase/protein-glutamine glutaminase (403 aa).

Residues 8–126 form the Response regulatory domain; sequence AVLIVDDSAL…SAHLRTVSRK (119 aa). Residue D59 is modified to 4-aspartylphosphate. The CheB-type methylesterase domain maps to 204-393; that stretch reads PLRESGALQI…VSLDDMAATI (190 aa). Residues S219, H246, and D342 contribute to the active site.

Belongs to the CheB family. In terms of processing, phosphorylated by CheA. Phosphorylation of the N-terminal regulatory domain activates the methylesterase activity.

The protein localises to the cytoplasm. It carries out the reaction [protein]-L-glutamate 5-O-methyl ester + H2O = L-glutamyl-[protein] + methanol + H(+). It catalyses the reaction L-glutaminyl-[protein] + H2O = L-glutamyl-[protein] + NH4(+). Its function is as follows. Involved in chemotaxis. Part of a chemotaxis signal transduction system that modulates chemotaxis in response to various stimuli. Catalyzes the demethylation of specific methylglutamate residues introduced into the chemoreceptors (methyl-accepting chemotaxis proteins or MCP) by CheR. Also mediates the irreversible deamidation of specific glutamine residues to glutamic acid. The chain is Protein-glutamate methylesterase/protein-glutamine glutaminase from Treponema pallidum (strain Nichols).